Here is a 35-residue protein sequence, read N- to C-terminus: Conotoxin Cl6.16 (35 aa).

3 cysteine pairs are disulfide-bonded: Cys10–Cys22, Cys16–Cys27, and Cys21–Cys34.

As to expression, expressed by the venom duct.

It is found in the secreted. This chain is Conotoxin Cl6.16, found in Californiconus californicus (California cone).